The primary structure comprises 565 residues: NAD-dependent malic enzyme (565 aa).

Catalysis depends on tyrosine 104, which acts as the Proton donor. Residue arginine 157 coordinates NAD(+). Catalysis depends on lysine 175, which acts as the Proton acceptor. 3 residues coordinate a divalent metal cation: glutamate 246, aspartate 247, and aspartate 270. NAD(+)-binding residues include aspartate 270 and asparagine 418.

This sequence belongs to the malic enzymes family. In terms of assembly, homotetramer. It depends on Mg(2+) as a cofactor. Requires Mn(2+) as cofactor.

It carries out the reaction (S)-malate + NAD(+) = pyruvate + CO2 + NADH. The enzyme catalyses oxaloacetate + H(+) = pyruvate + CO2. In Erwinia tasmaniensis (strain DSM 17950 / CFBP 7177 / CIP 109463 / NCPPB 4357 / Et1/99), this protein is NAD-dependent malic enzyme.